Here is a 304-residue protein sequence, read N- to C-terminus: MVKNQYISQNMENKEIENKEIENKKTDSKEFDKEIVSCLIKIVETIDSIKPIDPEILNKKDLDLFDLMMPLAESCGMGWYYKQLQTECKSNKEIKLQNKQQENSEEKNSEEKNSEEKNSEEKRMLEILNSNLPTEGKIIIVNATNGKERKAFYTWADYHNLSHQPTRIDLFDDTFIFKCEECGESNYDDDMRYQSDWSTINPGACYGSFIKCPNYCDTFIHTEDYDPYGGIKRMIAFNAIIIGHDIPKLSRKTTKRKHNKQGLSSNDLSVFNDTPVRDFIVMDLNDFHSKFKSKDNGYVKINDE.

Coiled-coil stretches lie at residues 3 to 35 (KNQY…DKEI) and 89 to 132 (KSNK…NSNL). The disordered stretch occupies residues 96–121 (LQNKQQENSEEKNSEEKNSEEKNSEE).

This is an uncharacterized protein from Acanthamoeba polyphaga (Amoeba).